The following is a 274-amino-acid chain: Imidazole glycerol phosphate synthase subunit HisF (274 aa).

Active-site residues include D11 and D134.

This sequence belongs to the HisA/HisF family. Heterodimer of HisH and HisF.

The protein resides in the cytoplasm. The enzyme catalyses 5-[(5-phospho-1-deoxy-D-ribulos-1-ylimino)methylamino]-1-(5-phospho-beta-D-ribosyl)imidazole-4-carboxamide + L-glutamine = D-erythro-1-(imidazol-4-yl)glycerol 3-phosphate + 5-amino-1-(5-phospho-beta-D-ribosyl)imidazole-4-carboxamide + L-glutamate + H(+). The protein operates within amino-acid biosynthesis; L-histidine biosynthesis; L-histidine from 5-phospho-alpha-D-ribose 1-diphosphate: step 5/9. In terms of biological role, IGPS catalyzes the conversion of PRFAR and glutamine to IGP, AICAR and glutamate. The HisF subunit catalyzes the cyclization activity that produces IGP and AICAR from PRFAR using the ammonia provided by the HisH subunit. The polypeptide is Imidazole glycerol phosphate synthase subunit HisF (Methanobrevibacter smithii (strain ATCC 35061 / DSM 861 / OCM 144 / PS)).